The sequence spans 665 residues: Macrolide export ATP-binding/permease protein MacB (665 aa).

The 239-residue stretch at 17 to 255 (MQVKGLIREF…VAQFSSIIDK (239 aa)) folds into the ABC transporter domain. 53–60 (GQSGSGKS) provides a ligand contact to ATP. Transmembrane regions (helical) follow at residues 287–307 (LLTM…VGLG), 544–564 (IAII…LVSV), 588–608 (FLIE…GMAF), and 630–650 (SIIA…FLPA).

This sequence belongs to the ABC transporter superfamily. Macrolide exporter (TC 3.A.1.122) family. Homodimer. Part of the tripartite efflux system MacAB-TolC, which is composed of an inner membrane transporter, MacB, a periplasmic membrane fusion protein, MacA, and an outer membrane component, TolC. The complex forms a large protein conduit and can translocate molecules across both the inner and outer membranes. Interacts with MacA.

The protein localises to the cell inner membrane. Part of the tripartite efflux system MacAB-TolC. MacB is a non-canonical ABC transporter that contains transmembrane domains (TMD), which form a pore in the inner membrane, and an ATP-binding domain (NBD), which is responsible for energy generation. Confers resistance against macrolides. This Psychrobacter arcticus (strain DSM 17307 / VKM B-2377 / 273-4) protein is Macrolide export ATP-binding/permease protein MacB.